Reading from the N-terminus, the 72-residue chain is Large ribosomal subunit protein bL31 (72 aa).

It belongs to the bacterial ribosomal protein bL31 family. Type A subfamily. In terms of assembly, part of the 50S ribosomal subunit.

Functionally, binds the 23S rRNA. In Rhodospirillum rubrum (strain ATCC 11170 / ATH 1.1.1 / DSM 467 / LMG 4362 / NCIMB 8255 / S1), this protein is Large ribosomal subunit protein bL31.